The following is a 121-amino-acid chain: Phosphoribosyl-ATP pyrophosphatase (121 aa).

Belongs to the PRA-PH family.

It is found in the cytoplasm. It catalyses the reaction 1-(5-phospho-beta-D-ribosyl)-ATP + H2O = 1-(5-phospho-beta-D-ribosyl)-5'-AMP + diphosphate + H(+). It functions in the pathway amino-acid biosynthesis; L-histidine biosynthesis; L-histidine from 5-phospho-alpha-D-ribose 1-diphosphate: step 2/9. The protein is Phosphoribosyl-ATP pyrophosphatase of Burkholderia multivorans (strain ATCC 17616 / 249).